A 346-amino-acid polypeptide reads, in one-letter code: E3 ubiquitin-protein ligase ARK2C (346 aa).

Disordered regions lie at residues 23–76 (PFQR…QHSG) and 267–288 (PHKY…GEES). Residues 266–268 (FPH) form a ubiquitin binding region. Basic and acidic residues predominate over residues 275–284 (PQDGKGKKDE). Zn(2+) is bound by residues cysteine 294 and cysteine 297. An RING-type; atypical zinc finger spans residues 294-335 (CTICLSMLEDGEDVRRLPCMHLFHQLCVDQWLAMSKKCPICR). Residues 309–313 (RLPCM) are ubiquitin binding. Positions 317 and 320 each coordinate Zn(2+).

This sequence belongs to the Arkadia family. In terms of assembly, monomer; binding to the ubiquitin-conjugating enzyme E2 does not trigger homodimerization.

It localises to the nucleus. The enzyme catalyses S-ubiquitinyl-[E2 ubiquitin-conjugating enzyme]-L-cysteine + [acceptor protein]-L-lysine = [E2 ubiquitin-conjugating enzyme]-L-cysteine + N(6)-ubiquitinyl-[acceptor protein]-L-lysine.. Binds free ubiquitin non-covalently via its RING-type zinc finger. Ubiquitin-binding leads to enhance the E3 ubiquitin-protein ligase activity by stabilizing the ubiquitin-conjugating enzyme E2 (donor ubiquitin) in the 'closed' conformation and activating ubiquitin transfer. Its function is as follows. E3 ubiquitin-protein ligase that acts as a regulator of motor axon elongation. Required for efficient motor axon extension in the dorsal forelimb by enhancing the transcriptional responses of the SMAD1/SMAD5/SMAD8 effectors, which are activated downstream of BMP. Acts by mediating ubiquitination and degradation of SMAD inhibitors such as SMAD6, SMAD7, SKI and SNON isoform of SKIL. The sequence is that of E3 ubiquitin-protein ligase ARK2C from Homo sapiens (Human).